We begin with the raw amino-acid sequence, 473 residues long: Glycine--tRNA ligase (473 aa).

Positions 101 and 172 each coordinate substrate. ATP contacts are provided by residues 204-206, 214-219, 289-290, and 333-336; these read RNE, FRTREF, EL, and GVER. Position 219-223 (219-223) interacts with substrate; the sequence is FEQME. A substrate-binding site is contributed by 329–333; that stretch reads EPSVG.

The protein belongs to the class-II aminoacyl-tRNA synthetase family. As to quaternary structure, homodimer.

It is found in the cytoplasm. The catalysed reaction is tRNA(Gly) + glycine + ATP = glycyl-tRNA(Gly) + AMP + diphosphate. In terms of biological role, catalyzes the attachment of glycine to tRNA(Gly). This chain is Glycine--tRNA ligase, found in Ureaplasma urealyticum serovar 10 (strain ATCC 33699 / Western).